Consider the following 216-residue polypeptide: NADH-quinone oxidoreductase subunit C (216 aa).

The protein belongs to the complex I 30 kDa subunit family. In terms of assembly, NDH-1 is composed of 14 different subunits. Subunits NuoB, C, D, E, F, and G constitute the peripheral sector of the complex.

Its subcellular location is the cell inner membrane. It carries out the reaction a quinone + NADH + 5 H(+)(in) = a quinol + NAD(+) + 4 H(+)(out). NDH-1 shuttles electrons from NADH, via FMN and iron-sulfur (Fe-S) centers, to quinones in the respiratory chain. The immediate electron acceptor for the enzyme in this species is believed to be ubiquinone. Couples the redox reaction to proton translocation (for every two electrons transferred, four hydrogen ions are translocated across the cytoplasmic membrane), and thus conserves the redox energy in a proton gradient. This is NADH-quinone oxidoreductase subunit C from Francisella tularensis subsp. tularensis (strain FSC 198).